Consider the following 259-residue polypeptide: NAD kinase (259 aa).

Catalysis depends on Asp-43, which acts as the Proton acceptor. Residues 43-44 (DG), 111-112 (NE), and Arg-136 contribute to the NAD(+) site.

It belongs to the NAD kinase family. The cofactor is a divalent metal cation.

It is found in the cytoplasm. The catalysed reaction is NAD(+) + ATP = ADP + NADP(+) + H(+). Its function is as follows. Involved in the regulation of the intracellular balance of NAD and NADP, and is a key enzyme in the biosynthesis of NADP. Catalyzes specifically the phosphorylation on 2'-hydroxyl of the adenosine moiety of NAD to yield NADP. This is NAD kinase from Mycoplasma genitalium (strain ATCC 33530 / DSM 19775 / NCTC 10195 / G37) (Mycoplasmoides genitalium).